The sequence spans 211 residues: tRNA (guanine-N(7)-)-methyltransferase (211 aa).

Residues E43, E68, D95, and D117 each contribute to the S-adenosyl-L-methionine site. The active site involves D117. Residues K121, D153, and 190–193 (TEYE) each bind substrate.

This sequence belongs to the class I-like SAM-binding methyltransferase superfamily. TrmB family.

The enzyme catalyses guanosine(46) in tRNA + S-adenosyl-L-methionine = N(7)-methylguanosine(46) in tRNA + S-adenosyl-L-homocysteine. Its pathway is tRNA modification; N(7)-methylguanine-tRNA biosynthesis. Functionally, catalyzes the formation of N(7)-methylguanine at position 46 (m7G46) in tRNA. The polypeptide is tRNA (guanine-N(7)-)-methyltransferase (Staphylococcus saprophyticus subsp. saprophyticus (strain ATCC 15305 / DSM 20229 / NCIMB 8711 / NCTC 7292 / S-41)).